Here is a 208-residue protein sequence, read N- to C-terminus: Small ribosomal subunit protein uS4A (208 aa).

The region spanning 98-164 (TRLDNVVYTL…AKIQSAIQAV (67 aa)) is the S4 RNA-binding domain.

This sequence belongs to the universal ribosomal protein uS4 family. Part of the 30S ribosomal subunit. Contacts protein S5. The interaction surface between S4 and S5 is involved in control of translational fidelity.

Its function is as follows. One of the primary rRNA binding proteins, it binds directly to 16S rRNA where it nucleates assembly of the body of the 30S subunit. With S5 and S12 plays an important role in translational accuracy. This chain is Small ribosomal subunit protein uS4A, found in Bdellovibrio bacteriovorus (strain ATCC 15356 / DSM 50701 / NCIMB 9529 / HD100).